Here is a 1038-residue protein sequence, read N- to C-terminus: Probable LRR receptor-like serine/threonine-protein kinase At1g53430 (1038 aa).

Positions 1 to 28 (MGFIFSTEKVVYVLLLIFVCLENFGSNA) are cleaved as a signal peptide. Topologically, residues 29-609 (QLLPEDEVQT…VDTGKPLSNG (581 aa)) are extracellular. N-linked (GlcNAc...) asparagine glycosylation is found at asparagine 48, asparagine 77, asparagine 85, asparagine 112, and asparagine 127. LRR repeat units follow at residues 113 to 137 (LTRL…LSQI), 139 to 160 (LEIL…LGDI), 161 to 184 (TTLT…LGNL), 185 to 208 (RSLK…LSNL), 210 to 234 (NLTE…NWTL), and 236 to 256 (ERLD…ISNL). N-linked (GlcNAc...) asparagine glycosylation is found at asparagine 196, asparagine 210, asparagine 231, asparagine 255, and asparagine 258. 5 LRR repeats span residues 259–281 (LTEL…LRNL), 282–305 (MKMK…IGSM), 306–328 (SELK…TFRN), 330–351 (DAFN…QFII), and 352–374 (NSKE…SCNQ). 4 N-linked (GlcNAc...) asparagine glycosylation sites follow: asparagine 339, asparagine 363, asparagine 471, and asparagine 561. Residues 610–630 (AVAGIVIAACAVFGLLVLVIL) traverse the membrane as a helical segment. Over 631–1038 (RLTGYLGGKE…LDDLTDVKIE (408 aa)) the chain is Cytoplasmic. Phosphothreonine is present on threonine 658. One can recognise a Protein kinase domain in the interval 669-950 (FDPENKIGEG…EGKIKVQPPL (282 aa)). ATP-binding positions include 675–683 (IGEGGFGPV) and lysine 697. Tyrosine 742 is subject to Phosphotyrosine. The Proton acceptor role is filled by aspartate 795. Phosphoserine is present on serine 828. Phosphothreonine occurs at positions 829 and 834. Tyrosine 842 bears the Phosphotyrosine mark. Residues 984-1038 (RNREQDISSSSMDGPWVDSSFSEPGKDVSLQQQEEGRSSSSSRKLLDDLTDVKIE) form a disordered region. Residues 1027–1038 (KLLDDLTDVKIE) are compositionally biased toward basic and acidic residues.

It belongs to the protein kinase superfamily. Ser/Thr protein kinase family.

The protein localises to the membrane. The catalysed reaction is L-seryl-[protein] + ATP = O-phospho-L-seryl-[protein] + ADP + H(+). It catalyses the reaction L-threonyl-[protein] + ATP = O-phospho-L-threonyl-[protein] + ADP + H(+). In Arabidopsis thaliana (Mouse-ear cress), this protein is Probable LRR receptor-like serine/threonine-protein kinase At1g53430.